Here is an 83-residue protein sequence, read N- to C-terminus: Protein Vpr (83 aa).

The residue at position 79 (serine 79) is a Phosphoserine; by host.

Interacts with human UNG.

It is found in the virion. Its subcellular location is the host nucleus. In terms of biological role, stimulates gene expression driven by the HIV-2 LTR. Prevents infected cells from undergoing mitosis and proliferating, by inducing arrest or delay in the G2 phase of the cell cycle. Cell cycle arrest creates a favorable environment for maximizing viral expression and production. This Pan troglodytes (Chimpanzee) protein is Protein Vpr.